Consider the following 183-residue polypeptide: Ribonuclease H (183 aa).

Residues 2 to 151 enclose the RNase H type-1 domain; it reads SQARFIAFSD…VDQLAQAAAR (150 aa). Residues Asp-11, Glu-57, Asp-79, and Asp-143 each coordinate Mg(2+).

Belongs to the RNase H family. As to quaternary structure, monomer. Mg(2+) serves as cofactor.

Its subcellular location is the cytoplasm. The enzyme catalyses Endonucleolytic cleavage to 5'-phosphomonoester.. Functionally, endonuclease that specifically degrades the RNA of RNA-DNA hybrids. The chain is Ribonuclease H from Anaeromyxobacter sp. (strain K).